The chain runs to 434 residues: MQLLAIGINHTTAPVSLRERVAFPLEQIKPALGALRTHLSGRNGTEAAILSTCNRTEIYCATDVLKPGEEGFEHTLRWLAQHHNVPASELAPHLYALPQSEAVRHAFRVASGLDSMVLGETQILGQLKDAVRTAGEAGALGTYLNQLFQRTFAVAKEVRGQTEIGAHSVSMAAAAVRLAQRIFESVSTQRVLFIGAGEMIELCATHFAAQTPRQIVVANRTVERGEKLAEQLSEQGLTTQAIRLQDLGDRLHEFDIVVSCTASSLPIIGLGAVERAVKRRKHRPIMMVDLAVPRDVEPEVARLDDVFLYTVDDLGAVVREGNALRQAAVAQAEAIIDSRVLNFMHWLETRSVVPVIRELQSQGEAIRQAEVERARRMLARGDDPAAVLEALSGALTRKFLHGPTHALNHTQGEDREALLRLVPGLFRHSSHSER.

Residues 52 to 55 (TCNR), serine 115, 120 to 122 (ETQ), and glutamine 126 each bind substrate. The Nucleophile role is filled by cysteine 53. Position 195 to 200 (195 to 200 (GAGEMI)) interacts with NADP(+).

This sequence belongs to the glutamyl-tRNA reductase family. As to quaternary structure, homodimer.

It catalyses the reaction (S)-4-amino-5-oxopentanoate + tRNA(Glu) + NADP(+) = L-glutamyl-tRNA(Glu) + NADPH + H(+). Its pathway is porphyrin-containing compound metabolism; protoporphyrin-IX biosynthesis; 5-aminolevulinate from L-glutamyl-tRNA(Glu): step 1/2. Functionally, catalyzes the NADPH-dependent reduction of glutamyl-tRNA(Glu) to glutamate 1-semialdehyde (GSA). The protein is Glutamyl-tRNA reductase of Cupriavidus metallidurans (strain ATCC 43123 / DSM 2839 / NBRC 102507 / CH34) (Ralstonia metallidurans).